The primary structure comprises 51 residues: Ribosome biogenesis protein Nop10 (51 aa).

It belongs to the NOP10 family.

In terms of biological role, involved in ribosome biogenesis; more specifically in 18S rRNA pseudouridylation and in cleavage of pre-rRNA. This chain is Ribosome biogenesis protein Nop10, found in Nitrosopumilus maritimus (strain SCM1).